We begin with the raw amino-acid sequence, 263 residues long: Isatin hydrolase (263 aa).

62–66 (FFAWN) provides a ligand contact to substrate. Residues H73, H77, and D79 each coordinate Mn(2+). Residue H83 is the Proton donor/acceptor of the active site. H212 serves as a coordination point for substrate.

The protein belongs to the Cyclase 1 superfamily. In terms of assembly, homodimer. Mn(2+) serves as cofactor.

It carries out the reaction isatin + H2O = isatinate + H(+). Inhibited by thioisatinate. In terms of biological role, involved in the degradation of the plant hormone indole-3-acetic acid (IAA). Catalyzes the hydrolysis of the cyclic amide bond (lactam) of isatin (1H-indole-2,3-dione) to yield isatinate (2-(2-aminophenyl)-2-oxoacetate). The polypeptide is Isatin hydrolase (Roseibium aggregatum (strain ATCC 25650 / DSM 13394 / JCM 20685 / NBRC 16684 / NCIMB 2208 / IAM 12614 / B1) (Stappia aggregata)).